Here is a 182-residue protein sequence, read N- to C-terminus: Inner membrane-spanning protein YciB (182 aa).

5 helical membrane-spanning segments follow: residues 22-42 (IYIA…VTYA), 50-70 (MHLI…IFHD), 72-92 (AFIK…LAVS), 118-138 (VTWY…YVAF), and 148-168 (FKVF…VVYL).

Belongs to the YciB family.

It localises to the cell inner membrane. In terms of biological role, plays a role in cell envelope biogenesis, maintenance of cell envelope integrity and membrane homeostasis. This Shewanella woodyi (strain ATCC 51908 / MS32) protein is Inner membrane-spanning protein YciB.